Reading from the N-terminus, the 440-residue chain is 5-hydroxytryptamine receptor 6 (440 aa).

Topologically, residues 1 to 27 are extracellular; sequence MVPEPGPSANSTPAWGAGPPSAPGGSG. Residues 28–52 form a helical membrane-spanning segment; sequence WVAAALCVVIALTAAANSLLIALIC. At 53–62 the chain is on the cytoplasmic side; sequence TQPALRNTSN. A helical transmembrane segment spans residues 63-88; it reads FFLVSLFTSDLMVGLVVMPPAMLNAL. The Extracellular portion of the chain corresponds to 89 to 96; the sequence is YGRWVLAR. The chain crosses the membrane as a helical span at residues 97-122; that stretch reads GLCLLWTAFDVMCCSASILNLCLISL. A disulfide bond links Cys99 and Cys180. Position 106 (Asp106) interacts with serotonin. Residues 123-142 lie on the Cytoplasmic side of the membrane; the sequence is DRYLLILSPLRYKLRMTPPR. Residues 143-167 form a helical membrane-spanning segment; sequence ALALVLGAWSLAALASFLPLLLGWH. Over 168–185 the chain is Extracellular; sequence ELGHARPPVPGQCRLLAS. A helical transmembrane segment spans residues 186–209; that stretch reads LPFVLVASGLTFFLPSGAICFTYC. The Cytoplasmic portion of the chain corresponds to 210 to 266; that stretch reads RILLAARKQAVQVASLTTGMASQASETLQVPRTPRPGVESADSRRLATKHSRKALKA. Residues 267-293 traverse the membrane as a helical segment; the sequence is SLTLGILLGMFFVTWLPFFVANIVQAV. Asn288 lines the serotonin pocket. Residues 294–299 are Extracellular-facing; the sequence is CDCISP. A helical transmembrane segment spans residues 300-323; it reads GLFDVLTWLGYCNSTMNPIIYPLF. The Cytoplasmic portion of the chain corresponds to 324 to 440; that stretch reads MRDFKRALGR…RPHPLGIPTN (117 aa). A disordered region spans residues 346–392; sequence ASLASPSLRTSHSGPRPGLSLQQVLPLPLPPDSDSDSDAGSGGSSGL. Over residues 347-358 the composition is skewed to polar residues; the sequence is SLASPSLRTSHS. Low complexity predominate over residues 362-371; that stretch reads PGLSLQQVLP.

The protein belongs to the G-protein coupled receptor 1 family. As to quaternary structure, interacts with MTOR, RPTOR and NF1. Interacts with CDK5.

The protein localises to the cell membrane. G-protein coupled receptor for 5-hydroxytryptamine (serotonin), a biogenic hormone that functions as a neurotransmitter, a hormone and a mitogen. Also has a high affinity for tricyclic psychotropic drugs. Ligand binding causes a conformation change that triggers signaling via guanine nucleotide-binding proteins (G proteins) and modulates the activity of downstream effectors. HTR6 is coupled to G(s) G alpha proteins and mediates activation of adenylate cyclase activity. Controls pyramidal neurons migration during corticogenesis, through the regulation of CDK5 activity. Is an activator of mTOR signaling. This is 5-hydroxytryptamine receptor 6 (HTR6) from Pan troglodytes (Chimpanzee).